Reading from the N-terminus, the 339-residue chain is MLDPRAQTLLKTLIERYIAEGQPVGSRTLSRYSGLELSPATIRNVMSDLEDLGLVISPHTSAGRIPTPRGYRLFVDTMLTVESAADEEAVTRTVKTTLQAGEPQKIVAAAASVLSNLSQFAGVVLTPRRSHVFKQIEFMRLSDKRILLIIVTPEGDVQNRIMATQRDFSPSQLVEASNYINAHFAGLSFDDVRRRLREEIDALRGDMTTLMHAAVTASTDESDTGETVLISGERNLLEVADLSSDMARLRKLFDVFDQKTSLLQLLDVSSHAAGVQIFIGGESNLVPIEEMSVVTAPYEVNGKIVGTLGVIGPTRMAYNRVIPIVDITARLLSLTLSQQ.

This sequence belongs to the HrcA family.

Its function is as follows. Negative regulator of class I heat shock genes (grpE-dnaK-dnaJ and groELS operons). Prevents heat-shock induction of these operons. The sequence is that of Heat-inducible transcription repressor HrcA from Paraburkholderia phytofirmans (strain DSM 17436 / LMG 22146 / PsJN) (Burkholderia phytofirmans).